A 249-amino-acid chain; its full sequence is GTP cyclohydrolase 1 type 2 homolog (249 aa).

Residues histidine 64, histidine 65, aspartate 102, histidine 217, and glutamate 221 each contribute to the a divalent metal cation site.

Belongs to the GTP cyclohydrolase I type 2/NIF3 family. In terms of assembly, homohexamer.

The chain is GTP cyclohydrolase 1 type 2 homolog from Neisseria meningitidis serogroup A / serotype 4A (strain DSM 15465 / Z2491).